Consider the following 254-residue polypeptide: tRNA (guanine-N(1)-)-methyltransferase (254 aa).

Residues G121 and L141 to L146 contribute to the S-adenosyl-L-methionine site.

Belongs to the RNA methyltransferase TrmD family. In terms of assembly, homodimer.

The protein localises to the cytoplasm. It catalyses the reaction guanosine(37) in tRNA + S-adenosyl-L-methionine = N(1)-methylguanosine(37) in tRNA + S-adenosyl-L-homocysteine + H(+). Functionally, specifically methylates guanosine-37 in various tRNAs. The protein is tRNA (guanine-N(1)-)-methyltransferase of Psychrobacter cryohalolentis (strain ATCC BAA-1226 / DSM 17306 / VKM B-2378 / K5).